A 445-amino-acid polypeptide reads, in one-letter code: ATPase PAAT (445 aa).

A phosphoserine mark is found at S177, S182, S254, and S302. The disordered stretch occupies residues 426-445 (PTGIPLRHYDSGERLSNGER). Over residues 432 to 445 (RHYDSGERLSNGER) the composition is skewed to basic and acidic residues.

As to quaternary structure, homodimer. Interacts with ABCB7, ABCB8/MITOSUR and ABCB10.

Its subcellular location is the cytoplasm. It localises to the mitochondrion. The catalysed reaction is ATP + H2O = ADP + phosphate + H(+). In terms of biological role, ATPase that regulates mitochondrial ABC transporters ABCB7, ABCB8/MITOSUR and ABCB10. Regulates mitochondrial ferric concentration and heme biosynthesis and plays a role in the maintenance of mitochondrial homeostasis and cell survival. In Homo sapiens (Human), this protein is ATPase PAAT.